A 110-amino-acid chain; its full sequence is Large ribosomal subunit protein uL22 (110 aa).

The protein belongs to the universal ribosomal protein uL22 family. In terms of assembly, part of the 50S ribosomal subunit.

This protein binds specifically to 23S rRNA; its binding is stimulated by other ribosomal proteins, e.g. L4, L17, and L20. It is important during the early stages of 50S assembly. It makes multiple contacts with different domains of the 23S rRNA in the assembled 50S subunit and ribosome. Its function is as follows. The globular domain of the protein is located near the polypeptide exit tunnel on the outside of the subunit, while an extended beta-hairpin is found that lines the wall of the exit tunnel in the center of the 70S ribosome. The polypeptide is Large ribosomal subunit protein uL22 (Glaesserella parasuis serovar 5 (strain SH0165) (Haemophilus parasuis)).